We begin with the raw amino-acid sequence, 229 residues long: LexA repressor (229 aa).

A DNA-binding region (H-T-H motif) is located at residues 28 to 48 (IREIGEALDIRSTNGVNDHLK). Catalysis depends on for autocatalytic cleavage activity residues Ser-147 and Lys-184.

This sequence belongs to the peptidase S24 family. In terms of assembly, homodimer.

It catalyses the reaction Hydrolysis of Ala-|-Gly bond in repressor LexA.. In terms of biological role, represses a number of genes involved in the response to DNA damage (SOS response), including recA and lexA. In the presence of single-stranded DNA, RecA interacts with LexA causing an autocatalytic cleavage which disrupts the DNA-binding part of LexA, leading to derepression of the SOS regulon and eventually DNA repair. This is LexA repressor from Anaeromyxobacter dehalogenans (strain 2CP-C).